The sequence spans 181 residues: Organ-specific protein S2 (181 aa).

Tandem repeats lie at residues 59 to 84 (HAKE…DNEI), 85 to 110 (HAKE…DNEI), 111 to 136 (HANE…DNEI), and 137 to 162 (HANE…DNEI). The interval 59 to 162 (HAKENMGAIG…NASAYGDNEI (104 aa)) is 4 X 26 AA tandem repeats. Residues 94–181 (GEFEPRPNAS…PRPSMTKYNA (88 aa)) form a disordered region.

It to organ specific protein P4. As to expression, expressed in stems.

This is Organ-specific protein S2 from Pisum sativum (Garden pea).